The primary structure comprises 52 residues: Conotoxin Cal6.25 (52 aa).

Residues 1–22 form the signal peptide; it reads MKLTHVLIVAVLVLTVCHLTMA. Cystine bridges form between cysteine 24/cysteine 41, cysteine 31/cysteine 45, and cysteine 40/cysteine 50.

As to expression, expressed by the venom duct.

Its subcellular location is the secreted. Probable neurotoxin. This Californiconus californicus (California cone) protein is Conotoxin Cal6.25.